Reading from the N-terminus, the 192-residue chain is Imidazoleglycerol-phosphate dehydratase (192 aa).

Belongs to the imidazoleglycerol-phosphate dehydratase family.

It is found in the cytoplasm. It carries out the reaction D-erythro-1-(imidazol-4-yl)glycerol 3-phosphate = 3-(imidazol-4-yl)-2-oxopropyl phosphate + H2O. Its pathway is amino-acid biosynthesis; L-histidine biosynthesis; L-histidine from 5-phospho-alpha-D-ribose 1-diphosphate: step 6/9. This Hydrogenobaculum sp. (strain Y04AAS1) protein is Imidazoleglycerol-phosphate dehydratase.